We begin with the raw amino-acid sequence, 33 residues long: Mu/delta-theraphotoxin-Pm2a (33 aa).

3 cysteine pairs are disulfide-bonded: Cys2-Cys16, Cys9-Cys21, and Cys15-Cys27. Phenylalanine amide is present on Phe33.

As to expression, expressed by the venom gland.

The protein localises to the secreted. Its function is as follows. Gating-modifier toxin with very weak activity on Nav1.7/SCN9A and Nav1.8/SCN10A. Shows 22% peak current inhibition (at 10 uM) on Nav1.8/SCN10A sodium channels. Show peak current inhibition and delays fast inactivation on Nav1.7/SCN9A (EC(50)&gt;10 uM). The chain is Mu/delta-theraphotoxin-Pm2a from Poecilotheria metallica (Metallic blue ornamental tree spider).